We begin with the raw amino-acid sequence, 262 residues long: Serine/arginine-rich SC35-like splicing factor SCL30 (262 aa).

Residues 1–14 (MRRYSPPYYSPPRR) are compositionally biased toward low complexity. Disordered regions lie at residues 1 to 48 (MRRY…SHGS) and 123 to 262 (ASES…VSPR). Phosphoserine is present on residues Ser-5, Ser-10, and Ser-22. Residues 31-42 (GYGGGGGGGGRR) show a composition bias toward gly residues. One can recognise an RRM domain in the interval 47 to 125 (GSLLVRNIPL…REITVVVASE (79 aa)). Positions 125–152 (ESRKRPEEMRVKTRTRSREPSGSRDRSH) are enriched in basic and acidic residues. The span at 153-167 (GRSRSRSISRSRSPR) shows a compositional bias: basic residues. Residues Ser-182, Ser-204, and Ser-206 each carry the phosphoserine modification. At Tyr-209 the chain carries Phosphotyrosine. The segment covering 217 to 239 (PDRDRNGDNEIREKPGYEAEDRR) has biased composition (basic and acidic residues). A compositionally biased stretch (low complexity) spans 243–262 (RAVSRSPSGSRSRSVEVSPR). Phosphoserine occurs at positions 254, 256, and 260.

Belongs to the splicing factor SR family. SCL subfamily. As to quaternary structure, component of the spliceosome. Interacts with RS2Z33, CYP59, CYP63 and CYP95. In terms of processing, phosphorylated.

Its subcellular location is the nucleus speckle. Its function is as follows. Involved in intron recognition and spliceosome assembly. Probably active at the 5' splice sites. The sequence is that of Serine/arginine-rich SC35-like splicing factor SCL30 (SCL30) from Arabidopsis thaliana (Mouse-ear cress).